The sequence spans 127 residues: MAKLSNDELIEAFKELTLIELSDFVKKFEEVFEVTAAAPVAAAAAPGAAAPAEEVEEKTAFDVILEAAGDKKIQVIKEVRALTSLGLGEAKALVDGAPKAVLEGANKEAADKAKAQLEAAGATVTVK.

It belongs to the bacterial ribosomal protein bL12 family. As to quaternary structure, homodimer. Part of the ribosomal stalk of the 50S ribosomal subunit. Forms a multimeric L10(L12)X complex, where L10 forms an elongated spine to which 2 to 4 L12 dimers bind in a sequential fashion. Binds GTP-bound translation factors.

Forms part of the ribosomal stalk which helps the ribosome interact with GTP-bound translation factors. Is thus essential for accurate translation. The polypeptide is Large ribosomal subunit protein bL12 (Clavibacter michiganensis subsp. michiganensis (strain NCPPB 382)).